We begin with the raw amino-acid sequence, 251 residues long: ATP synthase subunit a, chloroplastic (251 aa).

Transmembrane regions (helical) follow at residues Ile-3 to Val-23, Ile-38 to Ile-58, Val-99 to Ile-119, Ile-138 to Asn-158, Leu-203 to Leu-223, and Gly-224 to Gly-244.

The protein belongs to the ATPase A chain family. As to quaternary structure, F-type ATPases have 2 components, CF(1) - the catalytic core - and CF(0) - the membrane proton channel. CF(1) has five subunits: alpha(3), beta(3), gamma(1), delta(1), epsilon(1). CF(0) has four main subunits: a, b, b' and c.

The protein localises to the plastid. The protein resides in the chloroplast thylakoid membrane. In terms of biological role, key component of the proton channel; it plays a direct role in the translocation of protons across the membrane. In Euglena gracilis, this protein is ATP synthase subunit a, chloroplastic.